A 501-amino-acid chain; its full sequence is V-type proton ATPase subunit B 2 (501 aa).

R392 is an ATP binding site.

The protein belongs to the ATPase alpha/beta chains family. V-ATPase is a heteromultimeric enzyme made up of two complexes: the ATP-hydrolytic V1 complex and the proton translocation V0 complex. The V1 complex consists of three catalytic AB heterodimers that form a heterohexamer, three peripheral stalks each consisting of EG heterodimers, one central rotor including subunits D and F, and the regulatory subunits C and H. The proton translocation complex V0 consists of the proton transport subunit a, a ring of proteolipid subunits c9c'', rotary subunit d, subunits e and f, and the accessory subunits vah-19/Ac45 and vah-20/PRR. In terms of tissue distribution, predominantly expressed in male and hermaphrodite testis (at protein level).

Its subcellular location is the cytoplasm. Non-catalytic subunit of the V1 complex of vacuolar(H+)-ATPase (V-ATPase), a multisubunit enzyme composed of a peripheral complex (V1) that hydrolyzes ATP and a membrane integral complex (V0) that translocates protons. V-ATPase is responsible for acidifying and maintaining the pH of intracellular compartments and in some cell types, is targeted to the plasma membrane, where it is responsible for acidifying the extracellular environment. In neurons, required for necrotic cell death probably by promoting intracellular acidification. Required for spermatogenesis where it regulates the fibrous body-membranous organelle (FBMO) morphology in spermatocytes and the acidification of FBMO-derived secretory membranous organelles (MOs) as spermatids mature. This is V-type proton ATPase subunit B 2 from Caenorhabditis elegans.